The chain runs to 212 residues: Small ribosomal subunit protein uS5 (212 aa).

The 64-residue stretch at 48–111 folds into the S5 DRBM domain; it reads LEDEVLDINM…DIAKLNIIDV (64 aa).

The protein belongs to the universal ribosomal protein uS5 family. As to quaternary structure, part of the 30S ribosomal subunit. Contacts protein S4.

Its function is as follows. With S4 and S12 plays an important role in translational accuracy. The sequence is that of Small ribosomal subunit protein uS5 from Haloarcula marismortui (strain ATCC 43049 / DSM 3752 / JCM 8966 / VKM B-1809) (Halobacterium marismortui).